Reading from the N-terminus, the 454-residue chain is UPF0210 protein Blon_2054/BLIJ_2131 (454 aa).

It belongs to the UPF0210 family. Homodimer.

This is UPF0210 protein Blon_2054/BLIJ_2131 from Bifidobacterium longum subsp. infantis (strain ATCC 15697 / DSM 20088 / JCM 1222 / NCTC 11817 / S12).